The following is a 688-amino-acid chain: Glycine--tRNA ligase beta subunit (688 aa).

It belongs to the class-II aminoacyl-tRNA synthetase family. As to quaternary structure, tetramer of two alpha and two beta subunits.

The protein localises to the cytoplasm. It catalyses the reaction tRNA(Gly) + glycine + ATP = glycyl-tRNA(Gly) + AMP + diphosphate. This is Glycine--tRNA ligase beta subunit from Psychromonas ingrahamii (strain DSM 17664 / CCUG 51855 / 37).